The chain runs to 249 residues: Solute carrier family 25 member 35 (249 aa).

Solcar repeat units lie at residues methionine 1–glycine 90 and glutamine 152–valine 243. A run of 4 helical transmembrane segments spans residues threonine 38–glycine 58, leucine 59–isoleucine 79, tryptophan 154–proline 174, and leucine 226–lysine 249.

The protein belongs to the mitochondrial carrier (TC 2.A.29) family.

Its subcellular location is the mitochondrion inner membrane. The enzyme catalyses a dicarboxylate(in) + sulfate(out) = a dicarboxylate(out) + sulfate(in). Putative antiporter that exchanges dicarboxylates and sulfur oxoanions across the inner membrane of mitochondria. This is Solute carrier family 25 member 35 (SLC25A35) from Bos taurus (Bovine).